Reading from the N-terminus, the 503-residue chain is Probable cytosol aminopeptidase (503 aa).

The Mn(2+) site is built by Lys270 and Asp275. The active site involves Lys282. Mn(2+) is bound by residues Asp293, Asp352, and Glu354. Residue Arg356 is part of the active site.

This sequence belongs to the peptidase M17 family. It depends on Mn(2+) as a cofactor.

The protein resides in the cytoplasm. The catalysed reaction is Release of an N-terminal amino acid, Xaa-|-Yaa-, in which Xaa is preferably Leu, but may be other amino acids including Pro although not Arg or Lys, and Yaa may be Pro. Amino acid amides and methyl esters are also readily hydrolyzed, but rates on arylamides are exceedingly low.. It catalyses the reaction Release of an N-terminal amino acid, preferentially leucine, but not glutamic or aspartic acids.. Its function is as follows. Presumably involved in the processing and regular turnover of intracellular proteins. Catalyzes the removal of unsubstituted N-terminal amino acids from various peptides. The protein is Probable cytosol aminopeptidase of Citrobacter koseri (strain ATCC BAA-895 / CDC 4225-83 / SGSC4696).